We begin with the raw amino-acid sequence, 203 residues long: Translation initiation factor IF-3 (203 aa).

The span at 172 to 182 (EAPKNEKKTKE) shows a compositional bias: basic and acidic residues. Residues 172 to 203 (EAPKNEKKTKENNPPFNRINLMKGENHAKNED) are disordered.

This sequence belongs to the IF-3 family. As to quaternary structure, monomer.

It localises to the cytoplasm. Its function is as follows. IF-3 binds to the 30S ribosomal subunit and shifts the equilibrium between 70S ribosomes and their 50S and 30S subunits in favor of the free subunits, thus enhancing the availability of 30S subunits on which protein synthesis initiation begins. This Helicobacter pylori (strain J99 / ATCC 700824) (Campylobacter pylori J99) protein is Translation initiation factor IF-3.